The sequence spans 509 residues: Lysine--tRNA ligase (509 aa).

Residues E418 and E425 each coordinate Mg(2+).

This sequence belongs to the class-II aminoacyl-tRNA synthetase family. As to quaternary structure, homodimer. Requires Mg(2+) as cofactor.

The protein resides in the cytoplasm. It catalyses the reaction tRNA(Lys) + L-lysine + ATP = L-lysyl-tRNA(Lys) + AMP + diphosphate. This Acinetobacter baumannii (strain AB307-0294) protein is Lysine--tRNA ligase.